We begin with the raw amino-acid sequence, 197 residues long: uncharacterized protein (197 aa).

Positions Met-1 to Ala-19 are cleaved as a signal peptide.

It localises to the secreted. This is an uncharacterized protein from Arthroderma benhamiae (strain ATCC MYA-4681 / CBS 112371) (Trichophyton mentagrophytes).